A 458-amino-acid chain; its full sequence is Ammonium transporter Rh type B (458 aa).

Residues 1–13 (MAGSPSRAAGRRL) lie on the Cytoplasmic side of the membrane. The chain crosses the membrane as a helical span at residues 14 to 34 (QLPLLCLFLQGATAVLFAVFV). The Extracellular segment spans residues 35-61 (RYNHKTDAALWHRSNHSNADNEFYFRY). An N-linked (GlcNAc...) asparagine glycan is attached at asparagine 49. Residues 62–82 (PSFQDVHAMVFVGFGFLMVFL) form a helical membrane-spanning segment. Over 83–86 (QRYG) the chain is Cytoplasmic. The chain crosses the membrane as a helical span at residues 87–107 (FSSVGFTFLLAAFALQWSTLV). Residues 108–124 (QGFLHSFHGGHIHVGVE) lie on the Extracellular side of the membrane. Residues 125 to 145 (SMINADFCAGAVLISFGAVLG) form a helical membrane-spanning segment. The Cytoplasmic portion of the chain corresponds to 146–149 (KTGP). A helical transmembrane segment spans residues 150–170 (AQLLLMALLEVVLFGINEFVL). Residues 171 to 178 (LHLLGVRD) are Extracellular-facing. Residues 179-201 (AGGSMTIHTFGAYFGLVLSRVLY) traverse the membrane as a helical segment. The Cytoplasmic segment spans residues 202 to 219 (RPQLEKSKHRQGSVYHSD). The chain crosses the membrane as a helical span at residues 220–240 (LFAMIGTIFLWIFWPSFNAAL). Topologically, residues 241–251 (TALGAGQHRTA) are extracellular. Residues 252–272 (LNTYYSLAASTLGTFALSALV) traverse the membrane as a helical segment. At 273-282 (GEDGRLDMVH) the chain is on the cytoplasmic side. The helical transmembrane segment at 283-303 (IQNAALAGGVVVGTSSEMMLT) threads the bilayer. Proline 304 is a topological domain (extracellular). The helical transmembrane segment at 305–325 (FGALTAGFLAGTVSTLGYKFF) threads the bilayer. Topologically, residues 326-346 (RPILESKFKVQDTCGVHNLHG) are cytoplasmic. A helical membrane pass occupies residues 347 to 367 (MPGVLGALLGVLVAGLATHEA). Residues 368 to 393 (YGDGLESVFPLIAEGQRSATSQAMHQ) lie on the Extracellular side of the membrane. The helical transmembrane segment at 394 to 414 (LFGLFVTLMFASVGGGLGGLL) threads the bilayer. The Cytoplasmic segment spans residues 415–458 (LKLPFLDSPPDSQCYEDQVHWQVPGEHEDKAQRPLRVEEADTQA). Residues 416-424 (KLPFLDSPP) form an interaction with ANK3 region. The Basolateral sorting signal motif lies at 429–432 (YEDQ). The disordered stretch occupies residues 439–458 (GEHEDKAQRPLRVEEADTQA).

This sequence belongs to the ammonium transporter (TC 2.A.49) family. Rh subfamily. Interacts (via C-terminus) with ANK2 and ANK3; required for targeting to the basolateral membrane. Post-translationally, N-glycosylated.

Its subcellular location is the cell membrane. The protein resides in the basolateral cell membrane. It catalyses the reaction NH4(+)(in) = NH4(+)(out). The enzyme catalyses methylamine(out) = methylamine(in). The catalysed reaction is CO2(out) = CO2(in). Its function is as follows. Ammonium transporter involved in the maintenance of acid-base homeostasis. Transports ammonium and its related derivative methylammonium across the basolateral plasma membrane of epithelial cells likely contributing to renal transepithelial ammonia transport and ammonia metabolism. May transport either NH4(+) or NH3 ammonia species predominantly mediating an electrogenic NH4(+) transport. May act as a CO2 channel providing for renal acid secretion. The polypeptide is Ammonium transporter Rh type B (RHBG) (Pan troglodytes (Chimpanzee)).